The chain runs to 417 residues: Calreticulin (417 aa).

The first 17 residues, 1-17, serve as a signal peptide directing secretion; that stretch reads MLLPVPLLLGLLGLAAA. The segment at 18–197 is N-domain; it reads DPTVYFKEQF…NSQVESGSLE (180 aa). Gln26 contributes to the Ca(2+) binding site. An N6-acetyllysine modification is found at Lys48. 2 residues coordinate Ca(2+): Lys62 and Lys64. The residue at position 64 (Lys64) is an N6-(2-hydroxyisobutyryl)lysine. An alpha-D-glucoside contacts are provided by Tyr109, Lys111, Tyr128, and Asp135. Cysteines 137 and 163 form a disulfide. Lys159 carries the N6-acetyllysine modification. Residue Asn179 is glycosylated (N-linked (GlcNAc...) asparagine). The stretch at 191-202 is one 1-1 repeat; that stretch reads VESGSLEDDWDF. The 4 X approximate repeats stretch occupies residues 191-255; that stretch reads VESGSLEDDW…DAKKPEDWDE (65 aa). Positions 193 to 270 are disordered; it reads SGSLEDDWDF…WEPPVIQNPE (78 aa). The interval 198–308 is P-domain; that stretch reads DDWDFLPPKK…YSPDSNIYAY (111 aa). The segment covering 207 to 251 has biased composition (basic and acidic residues); the sequence is KIKDPDAAKPEDWDDRAKIDDPTDSKPEDWDKPEHIPDPDAKKPE. The residue at position 209 (Lys209) is an N6-acetyllysine. 6 repeat units span residues 210 to 221, 227 to 238, 244 to 255, 259 to 269, 273 to 283, and 287 to 297. Residues 237-270 are interaction with PPIB; it reads DKPEHIPDPDAKKPEDWDEEMDGEWEPPVIQNPE. Residues 252-261 show a composition bias toward acidic residues; it reads DWDEEMDGEW. Residues 259–297 form a 3 X approximate repeats region; that stretch reads GEWEPPVIQNPEYKGEWKPRQIDNPEYKGIWIHPEIDNP. Residues 309 to 417 are C-domain; the sequence is ENFAVLGLDL…AAAGQAKDEL (109 aa). Asp317 contacts an alpha-D-glucoside. Asp328 serves as a coordination point for Ca(2+). The segment at 350 to 417 is disordered; sequence TKAAEKQMKD…AAAGQAKDEL (68 aa). Over residues 352 to 378 the composition is skewed to basic and acidic residues; sequence AAEKQMKDKQDEEQRLHEEEEEKKGKE. A compositionally biased stretch (acidic residues) spans 379–408; the sequence is EEEADKDDDEDKDEDEEDEDEKEEEEEEDA. The short motif at 414–417 is the Prevents secretion from ER element; it reads KDEL.

It belongs to the calreticulin family. In terms of assembly, monomer. Component of an EIF2 complex at least composed of CELF1/CUGBP1, CALR, CALR3, EIF2S1, EIF2S2, HSP90B1 and HSPA5. Interacts with PDIA3/ERp57 and SPACA9. Interacts with TRIM21. Interacts with NR3C1. Interacts with PPIB. Interacts (via P-domain) with PDIA5. Interacts with GABARAP. Interacts with CLCC1.

Its subcellular location is the endoplasmic reticulum lumen. The protein resides in the cytoplasm. It is found in the cytosol. The protein localises to the secreted. It localises to the extracellular space. Its subcellular location is the extracellular matrix. The protein resides in the cell surface. It is found in the sarcoplasmic reticulum lumen. The protein localises to the cytoplasmic vesicle. It localises to the secretory vesicle. Its subcellular location is the cortical granule. The protein resides in the cytolytic granule. In terms of biological role, calcium-binding chaperone that promotes folding, oligomeric assembly and quality control in the endoplasmic reticulum (ER) via the calreticulin/calnexin cycle. This lectin interacts transiently with almost all of the monoglucosylated glycoproteins that are synthesized in the ER. Interacts with the DNA-binding domain of NR3C1 and mediates its nuclear export. Involved in maternal gene expression regulation. May participate in oocyte maturation via the regulation of calcium homeostasis. Present in the cortical granules of non-activated oocytes, is exocytosed during the cortical reaction in response to oocyte activation and might participate in the block to polyspermy. The polypeptide is Calreticulin (CALR) (Bos taurus (Bovine)).